The sequence spans 141 residues: VLSPADKANIKATWDKIGGHAGEYGGEALERTFASFPTTKTYFPHFDLSHGSAQVKGHGKKVADALTNAVAHLDDLPGALSALSDLHAYKLRVDPVNFKLLSHCLLVTLACHHPAEFTPAVHASLDKFLSSVSTVLTSKYR.

A Globin domain is found at 1 to 141 (VLSPADKANI…VSTVLTSKYR (141 aa)). Residue serine 3 is modified to Phosphoserine. N6-succinyllysine occurs at positions 7 and 11. An N6-acetyllysine; alternate modification is found at lysine 16. At lysine 16 the chain carries N6-succinyllysine; alternate. Tyrosine 24 carries the phosphotyrosine modification. Serine 35 carries the post-translational modification Phosphoserine. Lysine 40 is subject to N6-succinyllysine. Serine 49 is subject to Phosphoserine. Histidine 58 provides a ligand contact to O2. Histidine 87 contributes to the heme b binding site. Serine 102 is modified (phosphoserine). Threonine 108 carries the post-translational modification Phosphothreonine. Phosphoserine is present on residues serine 124 and serine 131. Phosphothreonine occurs at positions 134 and 137. Phosphoserine is present on serine 138.

The protein belongs to the globin family. Heterotetramer of two alpha chains and two beta chains. Red blood cells.

Its function is as follows. Involved in oxygen transport from the lung to the various peripheral tissues. In terms of biological role, hemopressin acts as an antagonist peptide of the cannabinoid receptor CNR1. Hemopressin-binding efficiently blocks cannabinoid receptor CNR1 and subsequent signaling. This is Hemoglobin subunit alpha (HBA) from Meles meles (Eurasian badger).